The primary structure comprises 288 residues: Pyruvate synthase subunit PorB (288 aa).

Residues Cys-16, Cys-19, and Cys-44 each coordinate [4Fe-4S] cluster. Positions 137 to 148 (STPYGASTTTSP) are enriched in polar residues. A disordered region spans residues 137–159 (STPYGASTTTSPHGKESFGEDRP). Over residues 149-159 (HGKESFGEDRP) the composition is skewed to basic and acidic residues. Cys-208 contributes to the [4Fe-4S] cluster binding site.

Heterotetramer of one alpha, one beta, one delta and one gamma chain. [4Fe-4S] cluster is required as a cofactor.

The enzyme catalyses 2 oxidized [2Fe-2S]-[ferredoxin] + pyruvate + CoA = 2 reduced [2Fe-2S]-[ferredoxin] + acetyl-CoA + CO2 + H(+). The chain is Pyruvate synthase subunit PorB (porB) from Methanothermobacter marburgensis (strain ATCC BAA-927 / DSM 2133 / JCM 14651 / NBRC 100331 / OCM 82 / Marburg) (Methanobacterium thermoautotrophicum).